The following is a 379-amino-acid chain: Alcohol dehydrogenase class-2 isozyme 2 (379 aa).

Positions 47, 69, 99, 102, 105, 113, and 176 each coordinate Zn(2+). NAD(+)-binding positions include 205–210 (GLGGVG), D229, K234, 298–300 (VGV), and R374.

This sequence belongs to the zinc-containing alcohol dehydrogenase family. Class-II subfamily. In terms of assembly, homodimer. Requires Zn(2+) as cofactor.

The protein resides in the cytoplasm. The enzyme catalyses a primary alcohol + NAD(+) = an aldehyde + NADH + H(+). It catalyses the reaction a secondary alcohol + NAD(+) = a ketone + NADH + H(+). The polypeptide is Alcohol dehydrogenase class-2 isozyme 2 (ADH2-2) (Oryctolagus cuniculus (Rabbit)).